We begin with the raw amino-acid sequence, 62 residues long: Short neurotoxin 1 (62 aa).

The segment covering 1 to 16 (LECHNQQSIQTPTTTG) has biased composition (polar residues). The segment at 1–20 (LECHNQQSIQTPTTTGCSGG) is disordered. 4 cysteine pairs are disulfide-bonded: Cys3/Cys24, Cys17/Cys41, Cys43/Cys54, and Cys55/Cys60.

It belongs to the three-finger toxin family. Short-chain subfamily. Type I alpha-neurotoxin sub-subfamily. As to expression, expressed by the venom gland.

It is found in the secreted. Its function is as follows. Binds to muscle nicotinic acetylcholine receptor (nAChR) and inhibit acetylcholine from binding to the receptor, thereby impairing neuromuscular transmission. The chain is Short neurotoxin 1 from Naja kaouthia (Monocled cobra).